The chain runs to 447 residues: MIKIKKGLNLPIAGRPEQVIYDGPAITEVALLGEEYAGMRPSMKVKEGDAVKKGQVLFEDKKNPGVVFTAPASGKIAAIHRGEKRVLQSVVIAVEGNDEIEFDRYAPDALAKLSGKEVRRNLIQSGLWTALRTRPFSKIPAVDAEPFAIFVNAMDTNPLAADPVVVIKEAAEDFRRGLLVLSRLTERKIHVCKAAGADVPSENAANIETHEFGGPHPAGLSGTHIHFIEPVGANKTVWTINYQDVIAIGRLFATGRLNTGRVVALGGSQVNKPRLLRTVLGAKVSQITAGELVDADNRVISGSVLNGAIAQGAHDYLGRYHNQISVIEEGRSKELLGWVAPQPDKYSITRTTLGHFLKNKLFKFNTAVNGGDRAMVPIGTYERVMPLDILPTLLLRDLIVGDTDSAQALGCLELDEEDLALCSFVCPGKYEYGPLLRKVLETIEKEG.

The protein belongs to the NqrA family. As to quaternary structure, composed of six subunits; NqrA, NqrB, NqrC, NqrD, NqrE and NqrF.

The catalysed reaction is a ubiquinone + n Na(+)(in) + NADH + H(+) = a ubiquinol + n Na(+)(out) + NAD(+). In terms of biological role, NQR complex catalyzes the reduction of ubiquinone-1 to ubiquinol by two successive reactions, coupled with the transport of Na(+) ions from the cytoplasm to the periplasm. NqrA to NqrE are probably involved in the second step, the conversion of ubisemiquinone to ubiquinol. This chain is Na(+)-translocating NADH-quinone reductase subunit A, found in Neisseria meningitidis serogroup C / serotype 2a (strain ATCC 700532 / DSM 15464 / FAM18).